We begin with the raw amino-acid sequence, 76 residues long: RNA-binding protein KhpA (76 aa).

The 48-residue stretch at 29–76 (SLHIELSVHPDDMGKVIGKQGRTAKALRSVVYAAATKQKRRVRLDIID) folds into the KH domain.

Belongs to the KhpA RNA-binding protein family. Forms a complex with KhpB.

The protein resides in the cytoplasm. In terms of biological role, a probable RNA chaperone. Forms a complex with KhpB which binds to cellular RNA and controls its expression. Plays a role in peptidoglycan (PG) homeostasis and cell length regulation. This is RNA-binding protein KhpA from Halalkalibacterium halodurans (strain ATCC BAA-125 / DSM 18197 / FERM 7344 / JCM 9153 / C-125) (Bacillus halodurans).